Consider the following 201-residue polypeptide: Potassium-transporting ATPase KdpC subunit (201 aa).

Residues 12-34 (LLALTMITGLAYPLAVTGLATVL) traverse the membrane as a helical segment. Residues 73-102 (TVAPDPADSSKTVSAPYNAANSGGSNLGPT) are disordered. Residues 81 to 101 (SSKTVSAPYNAANSGGSNLGP) show a composition bias toward polar residues.

Belongs to the KdpC family. The system is composed of three essential subunits: KdpA, KdpB and KdpC.

Its subcellular location is the cell inner membrane. Its function is as follows. Part of the high-affinity ATP-driven potassium transport (or Kdp) system, which catalyzes the hydrolysis of ATP coupled with the electrogenic transport of potassium into the cytoplasm. This subunit acts as a catalytic chaperone that increases the ATP-binding affinity of the ATP-hydrolyzing subunit KdpB by the formation of a transient KdpB/KdpC/ATP ternary complex. In Rhodopseudomonas palustris (strain ATCC BAA-98 / CGA009), this protein is Potassium-transporting ATPase KdpC subunit.